A 143-amino-acid polypeptide reads, in one-letter code: Small ribosomal subunit protein eS6 (143 aa).

This sequence belongs to the eukaryotic ribosomal protein eS6 family.

The sequence is that of Small ribosomal subunit protein eS6 from Methanoregula boonei (strain DSM 21154 / JCM 14090 / 6A8).